We begin with the raw amino-acid sequence, 640 residues long: 1-deoxy-D-xylulose-5-phosphate synthase (640 aa).

Residues H79 and 120–122 (AHS) contribute to the thiamine diphosphate site. D151 provides a ligand contact to Mg(2+). Thiamine diphosphate contacts are provided by residues 152–153 (GA), N180, Y289, and E371. A Mg(2+)-binding site is contributed by N180.

The protein belongs to the transketolase family. DXPS subfamily. In terms of assembly, homodimer. Mg(2+) serves as cofactor. The cofactor is thiamine diphosphate.

The enzyme catalyses D-glyceraldehyde 3-phosphate + pyruvate + H(+) = 1-deoxy-D-xylulose 5-phosphate + CO2. It participates in metabolic intermediate biosynthesis; 1-deoxy-D-xylulose 5-phosphate biosynthesis; 1-deoxy-D-xylulose 5-phosphate from D-glyceraldehyde 3-phosphate and pyruvate: step 1/1. Functionally, catalyzes the acyloin condensation reaction between C atoms 2 and 3 of pyruvate and glyceraldehyde 3-phosphate to yield 1-deoxy-D-xylulose-5-phosphate (DXP). This chain is 1-deoxy-D-xylulose-5-phosphate synthase, found in Erythrobacter litoralis (strain HTCC2594).